The following is a 131-amino-acid chain: Protein FAM107B (131 aa).

At Ala-2 the chain carries N-acetylalanine. The segment at 39-79 (MNQKRGLAPQNKPELQKVMEKRRRDQVIKQKEEEAQKKKSD) is disordered. An N6-acetyllysine modification is found at Lys-50. The segment covering 52–79 (ELQKVMEKRRRDQVIKQKEEEAQKKKSD) has biased composition (basic and acidic residues). A coiled-coil region spans residues 61 to 112 (RRDQVIKQKEEEAQKKKSDLEIELLKRQQKLEQLELEKQKLQEEQENAPEFV).

This sequence belongs to the FAM107 family. Expressed in the hippocampus and hypothalamus. Expressed in the pontine nuclei and reticulotegmental nucleus. Expressed in Purkinje cell and nuclear layers of the cerebelum. Expressed in the choroid plexus. Expressed in hippocampal granule neurons of the dente gyrus.

In Mus musculus (Mouse), this protein is Protein FAM107B.